A 329-amino-acid polypeptide reads, in one-letter code: Mas-related G-protein coupled receptor member X2 (329 aa).

Residues 1–33 (MDPTTPAWGTESTTMNGNDQALPLFCGKETLIS) lie on the Extracellular side of the membrane. A helical transmembrane segment spans residues 34–54 (VFLILFIALVGLVGNGFVLWL). Residues 55–63 (LGFRMRKNA) lie on the Cytoplasmic side of the membrane. The helical transmembrane segment at 64–84 (FSVYVLSLAGADFLFLCFQII) threads the bilayer. At 85-96 (NCLVYLSNVFCS) the chain is on the extracellular side. Residues 97-117 (ISINFPSFFITVMTCAYLAGL) form a helical membrane-spanning segment. The Cytoplasmic segment spans residues 118-144 (SMLSTISTERCLSVLWPIWYRCRRPRH). The helical transmembrane segment at 145–165 (LSAVACVLLWALSLLLSILEG) threads the bilayer. Residues 166-183 (KFCGLFGDGDSGWCQTFD) are Extracellular-facing. Residues 184–204 (LITAAWLIFLFMVLCGSSLAL) form a helical membrane-spanning segment. Residues 205-227 (LVRILCGSRGLPLTRLYLTILLT) lie on the Cytoplasmic side of the membrane. Residues 228–248 (VLVFLLCGLPFGIQWFLILWI) form a helical membrane-spanning segment. Over 249–263 (WKNSDVLFCHIHPVS) the chain is Extracellular. Residues 264–284 (VVLSSLNSSANPIIYFFVGSF) traverse the membrane as a helical segment. The Cytoplasmic portion of the chain corresponds to 285–329 (RKQWRLQQPILKLALQRALQDIAEVDHSEGCFRQGTPEMSRSSLV).

This sequence belongs to the G-protein coupled receptor 1 family. Mas subfamily.

The protein localises to the cell membrane. Functionally, mast cell-specific receptor for basic secretagogues, i.e. cationic amphiphilic drugs, as well as endo- or exogenous peptides, consisting of a basic head group and a hydrophobic core. Recognizes and binds small molecules containing a cyclized tetrahydroisoquinoline (THIQ), such as non-steroidal neuromuscular blocking drugs (NMBDs), including tubocurarine and atracurium. In response to these compounds, mediates pseudo-allergic reactions characterized by histamine release, inflammation and airway contraction. The chain is Mas-related G-protein coupled receptor member X2 (MRGPRX2) from Pan troglodytes (Chimpanzee).